The primary structure comprises 271 residues: NH(3)-dependent NAD(+) synthetase (271 aa).

Residue 43–50 (GISGGQDS) participates in ATP binding. D49 contributes to the Mg(2+) binding site. R136 lines the deamido-NAD(+) pocket. T156 serves as a coordination point for ATP. E161 serves as a coordination point for Mg(2+). Positions 169 and 176 each coordinate deamido-NAD(+). ATP-binding residues include K185 and T207. 256–257 (HK) contacts deamido-NAD(+).

This sequence belongs to the NAD synthetase family. As to quaternary structure, homodimer.

It carries out the reaction deamido-NAD(+) + NH4(+) + ATP = AMP + diphosphate + NAD(+) + H(+). Its pathway is cofactor biosynthesis; NAD(+) biosynthesis; NAD(+) from deamido-NAD(+) (ammonia route): step 1/1. In terms of biological role, catalyzes the ATP-dependent amidation of deamido-NAD to form NAD. Uses ammonia as a nitrogen source. The protein is NH(3)-dependent NAD(+) synthetase of Tropheryma whipplei (strain TW08/27) (Whipple's bacillus).